The primary structure comprises 295 residues: MRPEIAVLDIQGQYRVYTEFYRADAAENTIILINGSLATTASFAQTVRNLHPQFNVVLFDQPYSGKSKPHNRQERLISKETEAHILLELIEHFQADHVMSFSWGGASTLLALAHQPRYVKKAVVSSFSPVINEPMRDYLDRGCQYLAACDRYQVGNLVNDTIGKHLPSLFKRFNYRHVSSLDSHEYAQMHFHINQVLEHDLERALQGARNINIPVLFINGERDEYTTVEDARQFSKHVGRSQFSVIRDAGHFLDMENKTACENTRNVMLGFLKPTVREPRQRYQPVQQGQHAFAI.

One can recognise an AB hydrolase-1 domain in the interval 28–254 (NTIILINGSL…VIRDAGHFLD (227 aa)).

It participates in polyester biosynthesis; polyhydroxyalkanoate biosynthesis. In terms of biological role, catalyzes the transfer of the acyl moiety from in vitro synthesized 3-hydroxydecanoyl-CoA to acyl carrier protein. The chain is (R)-3-hydroxydecanoyl-ACP:CoA transacylase (phaG) from Pseudomonas putida (strain ATCC 47054 / DSM 6125 / CFBP 8728 / NCIMB 11950 / KT2440).